The sequence spans 459 residues: Spermidine/putrescine import ATP-binding protein PotA (459 aa).

Positions 15–334 constitute an ABC transporter domain; it reads IELIDIVKQF…PRNIWVAKFI (320 aa). 47–54 is a binding site for ATP; that stretch reads GPSGSGKT. Positions 115–203 are insert; that stretch reads RVPKENVKKE…EEFKNKYFKR (89 aa).

The protein belongs to the ABC transporter superfamily. Spermidine/putrescine importer (TC 3.A.1.11.1) family. In terms of assembly, the complex is composed of two ATP-binding proteins (PotA), two transmembrane proteins (PotB and PotC) and a solute-binding protein (PotD).

Its subcellular location is the cell membrane. It catalyses the reaction ATP + H2O + polyamine-[polyamine-binding protein]Side 1 = ADP + phosphate + polyamineSide 2 + [polyamine-binding protein]Side 1.. Part of the ABC transporter complex PotABCD involved in spermidine/putrescine import. Responsible for energy coupling to the transport system. This Mycoplasmopsis synoviae (strain 53) (Mycoplasma synoviae) protein is Spermidine/putrescine import ATP-binding protein PotA.